The following is a 233-amino-acid chain: Clathrin light chain (233 aa).

Residues 1 to 124 form a disordered region; sequence MSEKFPPLED…EDRSEVVDQW (124 aa). Over residues 17-43 the composition is skewed to basic and acidic residues; sequence PNDKKDDDTDFLKREAEILGDEFKTEQ. The residue at position 49 (Thr-49) is a Phosphothreonine. Ser-52 carries the phosphoserine modification. The span at 56–67 shows a compositional bias: acidic residues; it reads DDDEIRDFEEQF. Positions 69–92 are enriched in polar residues; the sequence is DINSANGAVSSDQNGSATVSSGND. A compositionally biased stretch (basic and acidic residues) spans 112–124; it reads SVKEDRSEVVDQW. The stretch at 125-186 forms a coiled coil; it reads KQRRAVEIHE…EAFLKKRDEF (62 aa). The involved in binding clathrin heavy chain stretch occupies residues 144–204; the sequence is KELQDEAIKH…DRALQLINQD (61 aa).

Belongs to the clathrin light chain family. As to quaternary structure, clathrin coats are formed from molecules containing 3 heavy chains and 3 light chains. Interacts with the auxilin-like clathrin uncoating factor SWA2.

It localises to the cytoplasmic vesicle membrane. It is found in the membrane. Its subcellular location is the coated pit. Its function is as follows. Clathrin is the major protein of the polyhedral coat of coated pits and vesicles. In yeast, it is involved in the retention of proteins in an intracellular membrane compartment, presumably the trans-Golgi. The yeast light chain is important for cell growth. The light chain may help to properly orient the assembly/ disassembly of the clathrin coats. The chain is Clathrin light chain (CLC1) from Saccharomyces cerevisiae (strain ATCC 204508 / S288c) (Baker's yeast).